The primary structure comprises 250 residues: Pyrroloquinoline-quinone synthase (250 aa).

The protein belongs to the PqqC family.

The enzyme catalyses 6-(2-amino-2-carboxyethyl)-7,8-dioxo-1,2,3,4,7,8-hexahydroquinoline-2,4-dicarboxylate + 3 O2 = pyrroloquinoline quinone + 2 H2O2 + 2 H2O + H(+). It participates in cofactor biosynthesis; pyrroloquinoline quinone biosynthesis. Its function is as follows. Ring cyclization and eight-electron oxidation of 3a-(2-amino-2-carboxyethyl)-4,5-dioxo-4,5,6,7,8,9-hexahydroquinoline-7,9-dicarboxylic-acid to PQQ. This Xanthomonas oryzae pv. oryzae (strain MAFF 311018) protein is Pyrroloquinoline-quinone synthase.